A 232-amino-acid polypeptide reads, in one-letter code: Large ribosomal subunit protein uL1 (232 aa).

This sequence belongs to the universal ribosomal protein uL1 family. As to quaternary structure, part of the 50S ribosomal subunit.

In terms of biological role, binds directly to 23S rRNA. The L1 stalk is quite mobile in the ribosome, and is involved in E site tRNA release. Its function is as follows. Protein L1 is also a translational repressor protein, it controls the translation of the L11 operon by binding to its mRNA. This Aromatoleum aromaticum (strain DSM 19018 / LMG 30748 / EbN1) (Azoarcus sp. (strain EbN1)) protein is Large ribosomal subunit protein uL1.